We begin with the raw amino-acid sequence, 290 residues long: Carbonic anhydrase-related protein (290 aa).

A Phosphoserine modification is found at S5. An Alpha-carbonic anhydrase domain is found at V27 to F289. The Proton donor/acceptor role is filled by H87. H118 and H141 together coordinate Zn(2+).

It belongs to the alpha-carbonic anhydrase family.

Its function is as follows. Does not have a carbonic anhydrase catalytic activity. This Rattus norvegicus (Rat) protein is Carbonic anhydrase-related protein (Ca8).